A 79-amino-acid chain; its full sequence is Immunity protein CdiI (79 aa).

The next 2 helical transmembrane spans lie at 12–32 (IIFFPMLCTVLGLLGIPIGLI) and 51–71 (VVLFTLKIGIPIGFILGLGLW).

Probably interacts with cognate toxin CdiA.

The protein localises to the cell inner membrane. Functionally, immunity protein component of a toxin-immunity protein module, which functions as a cellular contact-dependent growth inhibition (CDI) system. CDI modules allow bacteria to communicate with and inhibit the growth of closely related neighboring bacteria in a contact-dependent fashion. Protects cells against CdiA from the same strain, its cognate toxin protein. Growth inhibition is reversible upon induction of this protein, occurring about 2.5 hours after induction, and requires an energy source. Does not protect against non-cognate CdiA from E.coli strain 563 / UPEC, D.dadantii strain 3937 or Y.pestis strain CO92. The protein is Immunity protein CdiI of Escherichia coli.